The chain runs to 155 residues: SsrA-binding protein (155 aa).

It belongs to the SmpB family.

The protein resides in the cytoplasm. Functionally, required for rescue of stalled ribosomes mediated by trans-translation. Binds to transfer-messenger RNA (tmRNA), required for stable association of tmRNA with ribosomes. tmRNA and SmpB together mimic tRNA shape, replacing the anticodon stem-loop with SmpB. tmRNA is encoded by the ssrA gene; the 2 termini fold to resemble tRNA(Ala) and it encodes a 'tag peptide', a short internal open reading frame. During trans-translation Ala-aminoacylated tmRNA acts like a tRNA, entering the A-site of stalled ribosomes, displacing the stalled mRNA. The ribosome then switches to translate the ORF on the tmRNA; the nascent peptide is terminated with the 'tag peptide' encoded by the tmRNA and targeted for degradation. The ribosome is freed to recommence translation, which seems to be the essential function of trans-translation. The polypeptide is SsrA-binding protein (Bacillus cytotoxicus (strain DSM 22905 / CIP 110041 / 391-98 / NVH 391-98)).